The primary structure comprises 537 residues: Glutamate--tRNA ligase (537 aa).

The 'HIGH' region signature appears at 9–19 (PSPTGLQHIGG). Zn(2+) is bound by residues Cys-125, Cys-127, Cys-152, and Glu-154. The 'KMSKS' region motif lies at 270–274 (KLSKR). Lys-273 provides a ligand contact to ATP.

Belongs to the class-I aminoacyl-tRNA synthetase family. Glutamate--tRNA ligase type 1 subfamily. As to quaternary structure, monomer. Zn(2+) is required as a cofactor.

It is found in the cytoplasm. It carries out the reaction tRNA(Glu) + L-glutamate + ATP = L-glutamyl-tRNA(Glu) + AMP + diphosphate. Its function is as follows. Catalyzes the attachment of glutamate to tRNA(Glu) in a two-step reaction: glutamate is first activated by ATP to form Glu-AMP and then transferred to the acceptor end of tRNA(Glu). The polypeptide is Glutamate--tRNA ligase (Treponema pallidum (strain Nichols)).